Consider the following 196-residue polypeptide: Large ribosomal subunit protein uL6 (196 aa).

This sequence belongs to the universal ribosomal protein uL6 family. In terms of assembly, part of the 50S ribosomal subunit.

This protein binds to the 23S rRNA, and is important in its secondary structure. It is located near the subunit interface in the base of the L7/L12 stalk, and near the tRNA binding site of the peptidyltransferase center. This chain is Large ribosomal subunit protein uL6, found in Pyrobaculum aerophilum (strain ATCC 51768 / DSM 7523 / JCM 9630 / CIP 104966 / NBRC 100827 / IM2).